Reading from the N-terminus, the 333-residue chain is tRNA N6-adenosine threonylcarbamoyltransferase (333 aa).

Histidine 111 and histidine 115 together coordinate Fe cation. Substrate contacts are provided by residues leucine 134–glycine 138, aspartate 167, glycine 180, and asparagine 272. Fe cation is bound at residue aspartate 300.

The protein belongs to the KAE1 / TsaD family. Fe(2+) is required as a cofactor.

The protein localises to the cytoplasm. It carries out the reaction L-threonylcarbamoyladenylate + adenosine(37) in tRNA = N(6)-L-threonylcarbamoyladenosine(37) in tRNA + AMP + H(+). Functionally, required for the formation of a threonylcarbamoyl group on adenosine at position 37 (t(6)A37) in tRNAs that read codons beginning with adenine. Is involved in the transfer of the threonylcarbamoyl moiety of threonylcarbamoyl-AMP (TC-AMP) to the N6 group of A37, together with TsaE and TsaB. TsaD likely plays a direct catalytic role in this reaction. In Legionella pneumophila subsp. pneumophila (strain Philadelphia 1 / ATCC 33152 / DSM 7513), this protein is tRNA N6-adenosine threonylcarbamoyltransferase.